A 509-amino-acid polypeptide reads, in one-letter code: ATP synthase subunit alpha (509 aa).

ATP is bound at residue 169–176; that stretch reads GDRQTGKT.

The protein belongs to the ATPase alpha/beta chains family. As to quaternary structure, F-type ATPases have 2 components, CF(1) - the catalytic core - and CF(0) - the membrane proton channel. CF(1) has five subunits: alpha(3), beta(3), gamma(1), delta(1), epsilon(1). CF(0) has three main subunits: a(1), b(2) and c(9-12). The alpha and beta chains form an alternating ring which encloses part of the gamma chain. CF(1) is attached to CF(0) by a central stalk formed by the gamma and epsilon chains, while a peripheral stalk is formed by the delta and b chains.

Its subcellular location is the cell inner membrane. The enzyme catalyses ATP + H2O + 4 H(+)(in) = ADP + phosphate + 5 H(+)(out). Its function is as follows. Produces ATP from ADP in the presence of a proton gradient across the membrane. The alpha chain is a regulatory subunit. In Sinorhizobium fredii (strain NBRC 101917 / NGR234), this protein is ATP synthase subunit alpha.